Consider the following 379-residue polypeptide: UDP-N-acetylglucosamine--N-acetylmuramyl-(pentapeptide) pyrophosphoryl-undecaprenol N-acetylglucosamine transferase (379 aa).

UDP-N-acetyl-alpha-D-glucosamine is bound by residues Thr-17–Gly-19, Asn-128, Arg-169, Ser-197, and Gln-298.

The protein belongs to the glycosyltransferase 28 family. MurG subfamily.

It is found in the cell inner membrane. It carries out the reaction di-trans,octa-cis-undecaprenyl diphospho-N-acetyl-alpha-D-muramoyl-L-alanyl-D-glutamyl-meso-2,6-diaminopimeloyl-D-alanyl-D-alanine + UDP-N-acetyl-alpha-D-glucosamine = di-trans,octa-cis-undecaprenyl diphospho-[N-acetyl-alpha-D-glucosaminyl-(1-&gt;4)]-N-acetyl-alpha-D-muramoyl-L-alanyl-D-glutamyl-meso-2,6-diaminopimeloyl-D-alanyl-D-alanine + UDP + H(+). It functions in the pathway cell wall biogenesis; peptidoglycan biosynthesis. Cell wall formation. Catalyzes the transfer of a GlcNAc subunit on undecaprenyl-pyrophosphoryl-MurNAc-pentapeptide (lipid intermediate I) to form undecaprenyl-pyrophosphoryl-MurNAc-(pentapeptide)GlcNAc (lipid intermediate II). This is UDP-N-acetylglucosamine--N-acetylmuramyl-(pentapeptide) pyrophosphoryl-undecaprenol N-acetylglucosamine transferase from Brucella melitensis biotype 2 (strain ATCC 23457).